Here is a 251-residue protein sequence, read N- to C-terminus: Imidazole glycerol phosphate synthase subunit HisF (251 aa).

Residues aspartate 11 and aspartate 130 contribute to the active site.

The protein belongs to the HisA/HisF family. In terms of assembly, heterodimer of HisH and HisF.

The protein localises to the cytoplasm. The catalysed reaction is 5-[(5-phospho-1-deoxy-D-ribulos-1-ylimino)methylamino]-1-(5-phospho-beta-D-ribosyl)imidazole-4-carboxamide + L-glutamine = D-erythro-1-(imidazol-4-yl)glycerol 3-phosphate + 5-amino-1-(5-phospho-beta-D-ribosyl)imidazole-4-carboxamide + L-glutamate + H(+). Its pathway is amino-acid biosynthesis; L-histidine biosynthesis; L-histidine from 5-phospho-alpha-D-ribose 1-diphosphate: step 5/9. Functionally, IGPS catalyzes the conversion of PRFAR and glutamine to IGP, AICAR and glutamate. The HisF subunit catalyzes the cyclization activity that produces IGP and AICAR from PRFAR using the ammonia provided by the HisH subunit. The protein is Imidazole glycerol phosphate synthase subunit HisF of Chlorobium phaeovibrioides (strain DSM 265 / 1930) (Prosthecochloris vibrioformis (strain DSM 265)).